A 222-amino-acid polypeptide reads, in one-letter code: Kinetochore protein Spc25 (222 aa).

Residues 51–100 (RHQRKVGKLQKVIMERREELDKRVSFIEELDRELEATKLRSLAMKDRIKQ) are a coiled coil.

Belongs to the SPC25 family. As to quaternary structure, component of the Ndc80 complex, which is composed of Ndc80, Nuf2 and Spc25.

It is found in the nucleus. The protein localises to the chromosome. The protein resides in the centromere. It localises to the kinetochore. Acts as a component of the essential kinetochore-associated Ndc80 complex, which is required for chromosome segregation and spindle checkpoint activity during meiosis and mitosis. Required for kinetochore integrity and the organization of stable microtubule binding sites in the outer plate of the kinetochore. Participates in SAC signaling that responds specifically to disruptions in spindle microtubule dynamics. The NDC80 complex synergistically enhances the affinity of the SKA1 complex for microtubules and may allow the NDC80 complex to track depolymerizing microtubules. The protein is Kinetochore protein Spc25 of Drosophila sechellia (Fruit fly).